Reading from the N-terminus, the 96-residue chain is Aspartyl/glutamyl-tRNA(Asn/Gln) amidotransferase subunit C (96 aa).

The protein belongs to the GatC family. As to quaternary structure, heterotrimer of A, B and C subunits.

The enzyme catalyses L-glutamyl-tRNA(Gln) + L-glutamine + ATP + H2O = L-glutaminyl-tRNA(Gln) + L-glutamate + ADP + phosphate + H(+). It carries out the reaction L-aspartyl-tRNA(Asn) + L-glutamine + ATP + H2O = L-asparaginyl-tRNA(Asn) + L-glutamate + ADP + phosphate + 2 H(+). Its function is as follows. Allows the formation of correctly charged Asn-tRNA(Asn) or Gln-tRNA(Gln) through the transamidation of misacylated Asp-tRNA(Asn) or Glu-tRNA(Gln) in organisms which lack either or both of asparaginyl-tRNA or glutaminyl-tRNA synthetases. The reaction takes place in the presence of glutamine and ATP through an activated phospho-Asp-tRNA(Asn) or phospho-Glu-tRNA(Gln). This is Aspartyl/glutamyl-tRNA(Asn/Gln) amidotransferase subunit C from Trichormus variabilis (strain ATCC 29413 / PCC 7937) (Anabaena variabilis).